Here is a 305-residue protein sequence, read N- to C-terminus: Ribosomal RNA small subunit methyltransferase H (305 aa).

S-adenosyl-L-methionine-binding positions include 37–39 (GGH), aspartate 57, phenylalanine 85, aspartate 101, and histidine 108.

Belongs to the methyltransferase superfamily. RsmH family.

Its subcellular location is the cytoplasm. It carries out the reaction cytidine(1402) in 16S rRNA + S-adenosyl-L-methionine = N(4)-methylcytidine(1402) in 16S rRNA + S-adenosyl-L-homocysteine + H(+). Specifically methylates the N4 position of cytidine in position 1402 (C1402) of 16S rRNA. In Parabacteroides distasonis (strain ATCC 8503 / DSM 20701 / CIP 104284 / JCM 5825 / NCTC 11152), this protein is Ribosomal RNA small subunit methyltransferase H.